Here is a 135-residue protein sequence, read N- to C-terminus: Small ribosomal subunit protein uS8 (135 aa).

It belongs to the universal ribosomal protein uS8 family. In terms of assembly, part of the 30S ribosomal subunit. Contacts proteins S5 and S12.

In terms of biological role, one of the primary rRNA binding proteins, it binds directly to 16S rRNA central domain where it helps coordinate assembly of the platform of the 30S subunit. The polypeptide is Small ribosomal subunit protein uS8 (Parafrankia sp. (strain EAN1pec)).